Reading from the N-terminus, the 622-residue chain is Mitochondrial distribution and morphology protein 34 (622 aa).

The SMP-LTD domain maps to 1–204 (MSFKVNWNSL…LPTLIHQLSL (204 aa)). Disordered stretches follow at residues 364–393 (YSNK…DNTV), 442–468 (LETM…RAYQ), and 572–592 (LDGG…NFRP). Over residues 372–385 (KPKRRRIKVHKKSK) the composition is skewed to basic residues. Positions 446–455 (STGSSSSASS) are enriched in low complexity. A compositionally biased stretch (polar residues) spans 577–587 (NSANTNNSSGG).

The protein belongs to the MDM34 family. In terms of assembly, component of the ER-mitochondria encounter structure (ERMES) or MDM complex, composed of MMM1, MDM10, MDM12 and MDM34.

It is found in the mitochondrion outer membrane. In terms of biological role, component of the ERMES/MDM complex, which serves as a molecular tether to connect the endoplasmic reticulum (ER) and mitochondria. Components of this complex are involved in the control of mitochondrial shape and protein biogenesis, and function in nonvesicular lipid trafficking between the ER and mitochondria. MDM34 is required for the interaction of the ER-resident membrane protein MMM1 and the outer mitochondrial membrane-resident beta-barrel protein MDM10. The chain is Mitochondrial distribution and morphology protein 34 from Candida albicans (strain WO-1) (Yeast).